Here is a 318-residue protein sequence, read N- to C-terminus: NADH-ubiquinone oxidoreductase chain 1 (318 aa).

A run of 8 helical transmembrane segments spans residues 2-22, 70-90, 100-120, 140-160, 172-192, 217-237, 253-273, and 294-314; these read FLVN…FLTL, MFIM…TPLP, LGVL…LWSG, ISYE…SGSF, LWLI…TLAE, GGSF…MNAI, EFYT…FLWI, and LPLT…TASI.

The protein belongs to the complex I subunit 1 family. As to quaternary structure, core subunit of respiratory chain NADH dehydrogenase (Complex I) which is composed of 45 different subunits.

Its subcellular location is the mitochondrion inner membrane. It carries out the reaction a ubiquinone + NADH + 5 H(+)(in) = a ubiquinol + NAD(+) + 4 H(+)(out). Core subunit of the mitochondrial membrane respiratory chain NADH dehydrogenase (Complex I) which catalyzes electron transfer from NADH through the respiratory chain, using ubiquinone as an electron acceptor. Essential for the catalytic activity and assembly of complex I. The chain is NADH-ubiquinone oxidoreductase chain 1 (MT-ND1) from Emballonura alecto (Philippine sheath-tailed bat).